The following is a 344-amino-acid chain: Small ribosomal subunit biogenesis GTPase RsgA (344 aa).

Residues lysine 100–phenylalanine 268 form the CP-type G domain. GTP contacts are provided by residues asparagine 156–aspartate 159 and glycine 210–serine 218. Residues cysteine 292, cysteine 297, histidine 299, and cysteine 305 each contribute to the Zn(2+) site.

It belongs to the TRAFAC class YlqF/YawG GTPase family. RsgA subfamily. As to quaternary structure, monomer. Associates with 30S ribosomal subunit, binds 16S rRNA. Requires Zn(2+) as cofactor.

Its subcellular location is the cytoplasm. Functionally, one of several proteins that assist in the late maturation steps of the functional core of the 30S ribosomal subunit. Helps release RbfA from mature subunits. May play a role in the assembly of ribosomal proteins into the subunit. Circularly permuted GTPase that catalyzes slow GTP hydrolysis, GTPase activity is stimulated by the 30S ribosomal subunit. This Actinobacillus pleuropneumoniae serotype 5b (strain L20) protein is Small ribosomal subunit biogenesis GTPase RsgA.